Reading from the N-terminus, the 185-residue chain is HTH-type transcriptional regulator Hpr (185 aa).

The region spanning 13 to 157 is the HTH marR-type domain; sequence AMIFSQRIAQ…LIAILRNIYG (145 aa). Positions 63-86 form a DNA-binding region, H-T-H motif; that stretch reads ISEIAKFGVMHVSTAFNFSKKLEE.

Homodimer.

Functionally, negative regulator of protease production and sporulation. This chain is HTH-type transcriptional regulator Hpr, found in Bacillus cereus (strain G9842).